Here is an 806-residue protein sequence, read N- to C-terminus: Glycerol-3-phosphate acyltransferase (806 aa).

The HXXXXD motif signature appears at 305-310 (CHRSHM).

Belongs to the GPAT/DAPAT family.

The protein localises to the cell inner membrane. It carries out the reaction sn-glycerol 3-phosphate + an acyl-CoA = a 1-acyl-sn-glycero-3-phosphate + CoA. It functions in the pathway phospholipid metabolism; CDP-diacylglycerol biosynthesis; CDP-diacylglycerol from sn-glycerol 3-phosphate: step 1/3. This is Glycerol-3-phosphate acyltransferase from Salmonella paratyphi B (strain ATCC BAA-1250 / SPB7).